Reading from the N-terminus, the 260-residue chain is Large ribosomal subunit protein uL30 (260 aa).

Met1 is modified (N-acetylmethionine). 5 consecutive repeat copies span residues 7-18, 19-30, 31-42, 43-54, and 55-66. Residues 7-66 are 5 X 12 AA tandem repeats; it reads KKKKVAAALGTLKKKKVPAVPETLKKKRRNFAELKVKRLRKKFALKTLRKARRKLIYEKA. At Thr29 the chain carries Phosphothreonine. At Lys136 the chain carries N6-acetyllysine. The residue at position 139 (Lys139) is an N6-succinyllysine. A Phosphotyrosine modification is found at Tyr151.

The protein belongs to the universal ribosomal protein uL30 family. Component of the large ribosomal subunit. Homodimer. Interacts with DHX33.

The protein localises to the cytoplasm. Functionally, component of the large ribosomal subunit. The ribosome is a large ribonucleoprotein complex responsible for the synthesis of proteins in the cell. Binds to G-rich structures in 28S rRNA and in mRNAs. Plays a regulatory role in the translation apparatus; inhibits cell-free translation of mRNAs. The protein is Large ribosomal subunit protein uL30 (Rpl7) of Rattus norvegicus (Rat).